A 313-amino-acid chain; its full sequence is Protein FixB (313 aa).

255 to 283 (LYLAVGISGQIQHMVGANASQTIFAINKD) contributes to the FAD binding site.

This sequence belongs to the ETF alpha-subunit/FixB family. In terms of assembly, heterodimer of FixA and FixB.

Its pathway is amine and polyamine metabolism; carnitine metabolism. Functionally, required for anaerobic carnitine reduction. May bring reductant to CaiA. This chain is Protein FixB, found in Escherichia coli O157:H7.